The sequence spans 378 residues: UDP-N-acetylglucosamine--N-acetylmuramyl-(pentapeptide) pyrophosphoryl-undecaprenol N-acetylglucosamine transferase (378 aa).

UDP-N-acetyl-alpha-D-glucosamine is bound by residues 13–15 (TGG), asparagine 124, arginine 165, serine 193, and glutamine 294.

It belongs to the glycosyltransferase 28 family. MurG subfamily.

Its subcellular location is the cell inner membrane. The catalysed reaction is di-trans,octa-cis-undecaprenyl diphospho-N-acetyl-alpha-D-muramoyl-L-alanyl-D-glutamyl-meso-2,6-diaminopimeloyl-D-alanyl-D-alanine + UDP-N-acetyl-alpha-D-glucosamine = di-trans,octa-cis-undecaprenyl diphospho-[N-acetyl-alpha-D-glucosaminyl-(1-&gt;4)]-N-acetyl-alpha-D-muramoyl-L-alanyl-D-glutamyl-meso-2,6-diaminopimeloyl-D-alanyl-D-alanine + UDP + H(+). It participates in cell wall biogenesis; peptidoglycan biosynthesis. Its function is as follows. Cell wall formation. Catalyzes the transfer of a GlcNAc subunit on undecaprenyl-pyrophosphoryl-MurNAc-pentapeptide (lipid intermediate I) to form undecaprenyl-pyrophosphoryl-MurNAc-(pentapeptide)GlcNAc (lipid intermediate II). The polypeptide is UDP-N-acetylglucosamine--N-acetylmuramyl-(pentapeptide) pyrophosphoryl-undecaprenol N-acetylglucosamine transferase (Agrobacterium fabrum (strain C58 / ATCC 33970) (Agrobacterium tumefaciens (strain C58))).